Consider the following 130-residue polypeptide: Small ribosomal subunit protein uS9 (130 aa).

The tract at residues 99–130 (KSAGMLTRDPRMKERKKPGLKKARKASQFSKR) is disordered. Residues 111 to 130 (KERKKPGLKKARKASQFSKR) show a composition bias toward basic residues.

The protein belongs to the universal ribosomal protein uS9 family.

The sequence is that of Small ribosomal subunit protein uS9 from Latilactobacillus sakei subsp. sakei (strain 23K) (Lactobacillus sakei subsp. sakei).